The chain runs to 359 residues: Olfactory receptor 8S1 (359 aa).

The Extracellular segment spans residues 1–25 (MALGNHSTITEFLLLGLSADPNIRA). N5 carries an N-linked (GlcNAc...) asparagine glycan. Residues 26–46 (LLFVLFLGIYLLTIMENLMLL) traverse the membrane as a helical segment. Residues 47–54 (LMIRADSC) are Cytoplasmic-facing. A helical membrane pass occupies residues 55–75 (LHKPMYFFLSHLSFVDLCFSS). The Extracellular portion of the chain corresponds to 76 to 99 (VIVPKMLENLLSQRKTISVEGCLA). C97 and C189 are joined by a disulfide. Residues 100–120 (QVFFVFVTAGTEACLLSGMAY) traverse the membrane as a helical segment. Residues 121–139 (DRHAAICRPLLYGQIMGKQ) are Cytoplasmic-facing. A helical transmembrane segment spans residues 140-160 (LYMHLVWGSWGLGFLDALINV). At 161 to 197 (LLAVNMVFCEAKIIHHYSYEMPSLLPLSCSDISRSLI) the chain is on the extracellular side. Residues 198 to 217 (ALLCSTLLHGLGNFLLVFLS) traverse the membrane as a helical segment. Residues 218-237 (YTRIISTILSISSTSGRSKA) lie on the Cytoplasmic side of the membrane. A helical membrane pass occupies residues 238-258 (FSTCSAHLTAVTLYYGSGLLR). Residues 259–269 (HLMPNSGSPIE) are Extracellular-facing. The chain crosses the membrane as a helical span at residues 270 to 290 (LIFSVQYTVVTPMLNSLIYSL). At 291–359 (KNKEVKGERS…ALRAAPTALP (69 aa)) the chain is on the cytoplasmic side. A disordered region spans residues 301–338 (LRDSSHLPQLHKGQARWKRPAFTEGRREPGHPELSIPV).

The protein belongs to the G-protein coupled receptor 1 family.

It localises to the cell membrane. Its function is as follows. Odorant receptor. This Homo sapiens (Human) protein is Olfactory receptor 8S1 (OR8S1).